Consider the following 182-residue polypeptide: Signal peptidase I (182 aa).

Topologically, residues 1 to 13 are cytoplasmic; that stretch reads MTKQKEKRGRRWP. The helical transmembrane segment at 14 to 30 threads the bilayer; the sequence is WFVAVCVVATLRLFVFS. At 31 to 182 the chain is on the extracellular side; sequence NYVVEGKSMM…WPFKQFAFQF (152 aa). Residues serine 38 and lysine 79 contribute to the active site.

It belongs to the peptidase S26 family.

It is found in the cell membrane. The catalysed reaction is Cleavage of hydrophobic, N-terminal signal or leader sequences from secreted and periplasmic proteins.. The chain is Signal peptidase I (lepB) from Bacillus caldolyticus.